The following is a 347-amino-acid chain: GMP reductase (347 aa).

108–131 is a binding site for NADP(+); the sequence is ADFIKLSEILAMSEELNFICIDIA. Gly-181 and Gly-183 together coordinate K(+). The active-site Thioimidate intermediate is the Cys-186. 216-239 contacts NADP(+); it reads IIGDGGCSCAGDVAKAFGGGADFV.

This sequence belongs to the IMPDH/GMPR family. GuaC type 1 subfamily. In terms of assembly, homotetramer.

The catalysed reaction is IMP + NH4(+) + NADP(+) = GMP + NADPH + 2 H(+). Catalyzes the irreversible NADPH-dependent deamination of GMP to IMP. It functions in the conversion of nucleobase, nucleoside and nucleotide derivatives of G to A nucleotides, and in maintaining the intracellular balance of A and G nucleotides. In Shewanella halifaxensis (strain HAW-EB4), this protein is GMP reductase.